An 871-amino-acid polypeptide reads, in one-letter code: Mitochondrial 15S rRNA processing factor CCM1 (871 aa).

A mitochondrion-targeting transit peptide spans 1 to 72 (MLGRRLAGAK…EFKLRQLREF (72 aa)). PPR repeat units follow at residues 333-369 (NKEN…DHKP) and 370-404 (DAKT…KVDP). The disordered stretch occupies residues 704-724 (RPGSSTHLTHSEIKKQPSSQT).

The protein belongs to the CCM1 family. Binds to mitochondrial small subunit 15S rRNA.

Its subcellular location is the mitochondrion. Functionally, regulates mitochondrial small subunit maturation by controlling 15S rRNA 5'-end processing. Localizes to the 5' precursor of the 15S rRNA in a position that is subsequently occupied by mS47 in the mature yeast mtSSU. Uses structure and sequence-specific RNA recognition, binding to a single-stranded region of the precursor and specifically recognizing bases -6 to -1. The exchange of Ccm1 for mS47 is coupled to the irreversible removal of precursor rRNA that is accompanied by conformational changes of the mitoribosomal proteins uS5m and mS26. These conformational changes signal completion of 5'-end rRNA processing through protection of the mature 5'-end of the 15S rRNA and stabilization of mS47. The removal of the 5' precursor together with the dissociation of Ccm1 may be catalyzed by the 5'-3' exoribonuclease Pet127. Involved in the specific removal of group I introns in mitochondrial encoded transcripts. This is Mitochondrial 15S rRNA processing factor CCM1 (CCM1) from Lachancea thermotolerans (strain ATCC 56472 / CBS 6340 / NRRL Y-8284) (Yeast).